The chain runs to 302 residues: Sulfate adenylyltransferase subunit 2 (302 aa).

The protein belongs to the PAPS reductase family. CysD subfamily. In terms of assembly, heterodimer composed of CysD, the smaller subunit, and CysN.

The catalysed reaction is sulfate + ATP + H(+) = adenosine 5'-phosphosulfate + diphosphate. The protein operates within sulfur metabolism; hydrogen sulfide biosynthesis; sulfite from sulfate: step 1/3. Its function is as follows. With CysN forms the ATP sulfurylase (ATPS) that catalyzes the adenylation of sulfate producing adenosine 5'-phosphosulfate (APS) and diphosphate, the first enzymatic step in sulfur assimilation pathway. APS synthesis involves the formation of a high-energy phosphoric-sulfuric acid anhydride bond driven by GTP hydrolysis by CysN coupled to ATP hydrolysis by CysD. The sequence is that of Sulfate adenylyltransferase subunit 2 from Shewanella halifaxensis (strain HAW-EB4).